The chain runs to 274 residues: Protein-export membrane protein SecF (274 aa).

6 helical membrane passes run Leu-14 to Val-34, Ser-121 to Phe-141, Lys-143 to Gly-163, Ala-175 to Tyr-197, Thr-217 to Met-237, and Val-247 to Ile-267.

It belongs to the SecD/SecF family. SecF subfamily. In terms of assembly, part of the protein translocation apparatus. Forms a complex with SecD.

The protein localises to the cell membrane. Its function is as follows. Involved in protein export. This Methanopyrus kandleri (strain AV19 / DSM 6324 / JCM 9639 / NBRC 100938) protein is Protein-export membrane protein SecF.